Reading from the N-terminus, the 359-residue chain is MPPFISHFFLLSTFASLALCSFYCKNPGYPCLNGGTCLYNGECNCTSGFRGFNCGLDSSTISAACTVECHNKGICYNGDKCYCTKDYMGPTCQQAYDFADCNKSSMKIKAYRPTEFNGEMFLMQSMFGCKLAEVTSTIAGYKQYELDVPHDSTGPCKLKKTIDATTGDVHFEVNVSTIHHAGQFGMYDGLKTVSCHYSSRDQAIVKDVTNQDLIVSVTASDGSTPNLQEIPSNDVIHLTFKPVNLPGGYKAVKILDLEMYSVVEQWNEINSMVLLKDQCMTQKADELGYSVSNEVDGTSGRAILKAIPLFENVPAPVHFNYRLRFCRNRCILKSCASPSLKPMPKGEIFKHQGQGIRIV.

The N-terminal stretch at 1–20 (MPPFISHFFLLSTFASLALC) is a signal peptide. EGF-like domains lie at 21 to 55 (SFYC…FNCG) and 61 to 93 (ISAA…PTCQ). 6 disulfides stabilise this stretch: Cys24/Cys37, Cys31/Cys43, Cys45/Cys54, Cys65/Cys75, Cys69/Cys81, and Cys83/Cys92.

In terms of tissue distribution, prismatic layer of shell (at protein level). Expressed primarily in the mantle with highest level in the mantle edge and lower level in the mantle pallium.

The protein resides in the secreted. This is EGF-like domain containing protein 2 from Margaritifera margaritifera (Freshwater pearl mussel).